Here is a 380-residue protein sequence, read N- to C-terminus: NADPH oxidoreductase (380 aa).

The FAD-binding FR-type domain occupies 58 to 164 (ARELRGRILG…AAPQGNFVLP (107 aa)). Positions 299 to 380 (GTVTFARSGK…AASGDCVLDI (82 aa)) constitute a 2Fe-2S ferredoxin-type domain. 4 residues coordinate [2Fe-2S] cluster: Cys333, Cys338, Cys341, and Cys368.

As to quaternary structure, interacts with DesA3 to form a functional acyl-CoA desaturase complex. The cofactor is [2Fe-2S] cluster. It depends on FAD as a cofactor.

It localises to the cell membrane. The protein operates within lipid metabolism; fatty acid metabolism. Is likely involved in the aerobic desaturation system responsible for the synthesis of oleic acid from stearoyl-CoA; oleic acid is a precursor of mycobacterial membrane phospholipids and triglycerides. Is the electron transfer partner for the stearoyl-CoA 9-desaturase DesA3. Catalyzes electron transfer reaction between NADPH and the diiron center of DesA3. Cannot use NADH. The sequence is that of NADPH oxidoreductase from Mycobacterium tuberculosis (strain ATCC 25618 / H37Rv).